Consider the following 182-residue polypeptide: Probable inosine/xanthosine triphosphatase (182 aa).

Residue Glu65 participates in Mg(2+) binding. Residue 65 to 66 (EA) participates in substrate binding.

This sequence belongs to the YjjX NTPase family. In terms of assembly, homodimer. Mg(2+) is required as a cofactor. It depends on Mn(2+) as a cofactor.

The catalysed reaction is XTP + H2O = XDP + phosphate + H(+). It carries out the reaction ITP + H2O = IDP + phosphate + H(+). Functionally, phosphatase that hydrolyzes non-canonical purine nucleotides such as XTP and ITP to their respective diphosphate derivatives. Probably excludes non-canonical purines from DNA/RNA precursor pool, thus preventing their incorporation into DNA/RNA and avoiding chromosomal lesions. In Pyrobaculum neutrophilum (strain DSM 2338 / JCM 9278 / NBRC 100436 / V24Sta) (Thermoproteus neutrophilus), this protein is Probable inosine/xanthosine triphosphatase.